Reading from the N-terminus, the 161-residue chain is MORN repeat-containing protein 5 (161 aa).

3 MORN repeats span residues 8–30 (YIGE…TETI), 31–53 (YVGE…SGSQ), and 54–75 (YDAI…DGLH).

Expressed in sperm (at protein level).

The protein localises to the cell projection. It is found in the cilium. The protein resides in the flagellum. This is MORN repeat-containing protein 5 (MORN5) from Homo sapiens (Human).